Here is a 934-residue protein sequence, read N- to C-terminus: MEDFKDFTEVTQFTNVQYLGCSQLVNNDNDNEMKALMKVLDEQKGAQTINVTLVVPHNISGTVKLIDAQGKVLSSFSLVNIRFCIRGESSTSQNNCFGISFTHKISVGEHNSSDILHQCHVFRTSKAETAAKALYSFSYAFSNKNVSSESNRLEFQFESILEVKENDGTVEKPSWKLCPQHNGVFKVRRDREKKIVVQLRQIDGFLLNIKKCFGMLLAAGRNLRHSDLQLLEMDRNATGTDSAVFVIEANWDPRVHMFEVLNTETPRDTRVFMTVAIDVIVSEISEPIRFSMEAMSRVFHEHERFYKTPQTVVSEEFTLVLEKSCDQSDPNDRKLTFISLESDSDRKRSKQNLGKSPSRMPTQLLHPTGDDESDCDEPLLSGSGKVSQECKEEHLEMWDQLIENWDQQSDRPQKISELVLDGIPDKLRGRVWQLLSNVRILAIDQPDLVEKYHIFLSQPCPSEQVIMRDIHRTFPAHDYFKESQGKGQQSLYKISKVYSLYDEEVSYCQGLSFLAASLLLHMPEEQAFCTLVKIMFNYGLRDLFKLGFDNLHLRFFQLTALLKDYIPDLSHHLEHIGIETHMYASQWFLTLFTAKFPLQMVFFILDLFLSQGMNTIFHISLALLDDAKTDLLQLDFEGTLKYFRVSLPRKYRTEASTKCLIHKAVKFRLNHSKLEVYENEYKRIKELERENEDPVLRMEKEIGRHQANTLRLERENDDLAHELVTSKIELRRKLDVAEDQIETSANAIERLTRQNMDILEENKNLMREYEQIKEMYRRDVLRLEENGSRAEKLLAEYKKLFSERSKRAENEREHFEVQKKAIIARISDCDKCWPAVCEWEKNRSPVHSASTPTGPDLLTKLEEREDHIKNLEIDLAQTKLSLVEAECRNQDLTHQLMAQSESDGKKWFKKTITQLKEVGSSLKHHERSNSSVTP.

The 119-residue stretch at 16 to 134 (VQYLGCSQLV…SKAETAAKAL (119 aa)) folds into the PID domain. The tract at residues 337-383 (FISLESDSDRKRSKQNLGKSPSRMPTQLLHPTGDDESDCDEPLLSGS) is disordered. Positions 351 to 361 (QNLGKSPSRMP) are enriched in polar residues. One can recognise a Rab-GAP TBC domain in the interval 422 to 612 (GIPDKLRGRV…FILDLFLSQG (191 aa)). 2 coiled-coil regions span residues 727 to 800 (KIEL…YKKL) and 861 to 895 (LEEREDHIKNLEIDLAQTKLSLVEAECRNQDLTHQ).

In terms of biological role, rab GTPase activating protein for the small GTPases rab-6.1 and rab-6.2. Probably acts through rab-6.1 and rab-6.2 to play a role in microRNA-mediated gene silencing in different tissue types. Required for seam cell division and alae formation. This Caenorhabditis elegans protein is Rab GTPase-activating protein tbc-11.